The chain runs to 339 residues: MSTVHEILCKLSLEGDHSTPPSAYGSVKAYTNFDAERDALNIETAIKTKGVDEVTIVNILTNRSNEQRQDIAFAYQRRTKKELASALKSALSGHLETVILGLLKTPAQYDASELKASMKGLGTDEDSLIEIICSRTNQELQEINRVYKEMYKTDLEKDIVSDTSGDFRKLMVALAKGRRAEDGSVIDYELIDQDARDLYDAGVKRKGTDVPKWISIMTERSVCHLQKVFERYKSYSPYDMLESIKKEVKGDLENAFLNLVQCIQNKPLYFADRLYDSMKGKGTRDKVLIRIMVSRSEVDMLKIRSEFKKKYGKSLYYYIQQDTKGDYQKALLYLCGGDD.

At serine 2 the chain carries N-acetylserine. The interval 2-24 is S100A10-binding site; sequence STVHEILCKLSLEGDHSTPPSAY. Tyrosine 24 is modified (phosphotyrosine; by SRC). Position 26 is a phosphoserine; by PKC (serine 26). Annexin repeat units lie at residues 33-104 and 105-176; these read FDAE…GLLK and TPAQ…ALAK. Lysine 49 bears the N6-acetyllysine; alternate mark. A Glycyl lysine isopeptide (Lys-Gly) (interchain with G-Cter in SUMO1); alternate cross-link involves residue lysine 49. Lysine 49 participates in a covalent cross-link: Glycyl lysine isopeptide (Lys-Gly) (interchain with G-Cter in SUMO2); alternate. Lysine 152 is modified (N6-acetyllysine). Serine 184 carries the post-translational modification Phosphoserine. Annexin repeat units follow at residues 189–261 and 265–336; these read ELID…NLVQ and NKPL…YLCG. At tyrosine 199 the chain carries Phosphotyrosine. Lysine 227 bears the N6-acetyllysine mark.

Belongs to the annexin family. In terms of assembly, heterotetramer containing 2 light chains of S100A10/p11 and 2 heavy chains of ANXA2/p36. Interacts with ATP1B1. Interacts with DYSF. Interacts with COCH. Interacts (via repeat Annexin 1) with PCSK9 (via the C-terminal domain); the interaction inhibits the degradation of LDLR. Interacts with CEACAM1 (via the cytoplasmic domain); this interaction is regulated by phosphorylation of CEACAM1. Interacts with APPL2 and APPL1; targets APPL2 to endosomes and acting in parallel to RAB5A. Interacts with S100A4. May interact with UBAP2. Interacts with PLEKHG4B; this interaction is required for PLEKHG4B localization to cell-cell adhesions. Post-translationally, ISGylated.

It localises to the secreted. The protein localises to the extracellular space. The protein resides in the extracellular matrix. Its subcellular location is the basement membrane. It is found in the melanosome. Functionally, calcium-regulated membrane-binding protein whose affinity for calcium is greatly enhanced by anionic phospholipids. It binds two calcium ions with high affinity. May be involved in heat-stress response. Inhibits PCSK9-enhanced LDLR degradation, probably reduces PCSK9 protein levels via a translational mechanism but also competes with LDLR for binding with PCSK9. Binds to endosomes damaged by phagocytosis of particulate wear debris and participates in endosomal membrane stabilization, thereby limiting NLRP3 inflammasome activation. Required for endothelial cell surface plasmin generation and may support fibrinolytic surveillance and neoangiogenesis. This chain is Annexin A2 (ANXA2), found in Bos taurus (Bovine).